The primary structure comprises 289 residues: Mitochondrial fission regulator 1-like (289 aa).

Phosphothreonine is present on T27. Phosphoserine is present on residues S38, S100, S107, S221, S222, S235, S258, and S270.

This sequence belongs to the MTFR1 family. In terms of processing, phosphorylated by AMPK. Upon stress, phosphorylation by AMPK is sufficient to induce mitochondrial fragmentation.

It localises to the mitochondrion outer membrane. Its function is as follows. Mitochondrial protein required for adaptation of miochondrial dynamics to metabolic changes. Regulates mitochondrial morphology at steady state and mediates AMPK-dependent stress-induced mitochondrial fragmentation via the control of OPA1 levels. This chain is Mitochondrial fission regulator 1-like (Mtfr1l), found in Rattus norvegicus (Rat).